A 249-amino-acid chain; its full sequence is MQMAPQMGYDRAITVFSPDGRLFQVEYAREAVKRGTTAVGIKAADGVVLLVDKRITSRLVEAESIEKIFQIDDHIGAATSGLVADARSLVDRARVEAQVNRVSYDEPIGVEVISKKICDHKQTYTQYGGVRPYGTALLIAGVDDNLPRLFETDPSGALLEYKATAIGAGRNAVVEVFEAEYRQDMNMDAAILLGMDALYRAAEGKFDASTLEVGIVSLQDKKFRKLVPEEVENYVQQILEKHKETENKE.

The protein belongs to the peptidase T1A family. The 20S proteasome core is composed of 14 alpha and 14 beta subunits that assemble into four stacked heptameric rings, resulting in a barrel-shaped structure. The two inner rings, each composed of seven catalytic beta subunits, are sandwiched by two outer rings, each composed of seven alpha subunits. The catalytic chamber with the active sites is on the inside of the barrel. Has a gated structure, the ends of the cylinder being occluded by the N-termini of the alpha-subunits. Is capped at one or both ends by the proteasome regulatory ATPase, PAN.

The protein resides in the cytoplasm. Its activity is regulated as follows. The formation of the proteasomal ATPase PAN-20S proteasome complex, via the docking of the C-termini of PAN into the intersubunit pockets in the alpha-rings, triggers opening of the gate for substrate entry. Interconversion between the open-gate and close-gate conformations leads to a dynamic regulation of the 20S proteasome proteolysis activity. In terms of biological role, component of the proteasome core, a large protease complex with broad specificity involved in protein degradation. This chain is Proteasome subunit alpha, found in Methanosarcina barkeri (strain Fusaro / DSM 804).